Consider the following 129-residue polypeptide: Small ribosomal subunit protein uS11 (129 aa).

It belongs to the universal ribosomal protein uS11 family. As to quaternary structure, part of the 30S ribosomal subunit. Interacts with proteins S7 and S18. Binds to IF-3.

Its function is as follows. Located on the platform of the 30S subunit, it bridges several disparate RNA helices of the 16S rRNA. Forms part of the Shine-Dalgarno cleft in the 70S ribosome. The chain is Small ribosomal subunit protein uS11 from Sodalis glossinidius (strain morsitans).